A 192-amino-acid polypeptide reads, in one-letter code: MIKAKIEDSGMPPTRAEIARELGFRSANAAEEHLKALARKEVIEIVPGASRGIRVLRHDEVEAKGLPLIGRVAAGEPILAQEHVETHYEVDPALFKPRADFLLRVNGMSMKDIGIMDGDLLAVHKTQDVHNGQVVVARVDDDVTVKRLDKQGSQVLLHAENEDFAPIVVDLTHQQLTIEGIAVGVIRTADWM.

The H-T-H motif DNA-binding region spans 15–35 (RAEIARELGFRSANAAEEHLK). Residues S109 and K146 each act as for autocatalytic cleavage activity in the active site.

This sequence belongs to the peptidase S24 family. As to quaternary structure, homodimer.

It catalyses the reaction Hydrolysis of Ala-|-Gly bond in repressor LexA.. In terms of biological role, represses a number of genes involved in the response to DNA damage (SOS response), including recA and lexA. In the presence of single-stranded DNA, RecA interacts with LexA causing an autocatalytic cleavage which disrupts the DNA-binding part of LexA, leading to derepression of the SOS regulon and eventually DNA repair. The chain is LexA repressor from Photobacterium profundum (strain SS9).